The primary structure comprises 99 residues: Large ribosomal subunit protein bL21 (99 aa).

The protein belongs to the bacterial ribosomal protein bL21 family. Part of the 50S ribosomal subunit. Contacts protein L20.

This protein binds to 23S rRNA in the presence of protein L20. This chain is Large ribosomal subunit protein bL21, found in Neorickettsia sennetsu (strain ATCC VR-367 / Miyayama) (Ehrlichia sennetsu).